The sequence spans 425 residues: Adenylosuccinate synthetase (425 aa).

Residues 12–18 (GDEGKGK) and 40–42 (GHT) contribute to the GTP site. Asp-13 functions as the Proton acceptor in the catalytic mechanism. Positions 13 and 40 each coordinate Mg(2+). Residues 13–16 (DEGK), 38–41 (NAGH), Thr-126, Arg-140, Gln-221, Thr-236, and Arg-300 contribute to the IMP site. His-41 functions as the Proton donor in the catalytic mechanism. 296-302 (ATTGRPR) lines the substrate pocket. Residues Arg-302, 328 to 330 (KLD), and 410 to 412 (STG) contribute to the GTP site.

The protein belongs to the adenylosuccinate synthetase family. In terms of assembly, homodimer. The cofactor is Mg(2+).

It is found in the cytoplasm. It carries out the reaction IMP + L-aspartate + GTP = N(6)-(1,2-dicarboxyethyl)-AMP + GDP + phosphate + 2 H(+). Its pathway is purine metabolism; AMP biosynthesis via de novo pathway; AMP from IMP: step 1/2. In terms of biological role, plays an important role in the de novo pathway of purine nucleotide biosynthesis. Catalyzes the first committed step in the biosynthesis of AMP from IMP. This chain is Adenylosuccinate synthetase, found in Thermodesulfovibrio yellowstonii (strain ATCC 51303 / DSM 11347 / YP87).